Here is a 113-residue protein sequence, read N- to C-terminus: Iron-sulfur cluster insertion protein ErpA (113 aa).

The iron-sulfur cluster site is built by C41, C105, and C107.

It belongs to the HesB/IscA family. As to quaternary structure, homodimer. It depends on iron-sulfur cluster as a cofactor.

Functionally, required for insertion of 4Fe-4S clusters for at least IspG. This Vibrio vulnificus (strain YJ016) protein is Iron-sulfur cluster insertion protein ErpA.